A 543-amino-acid chain; its full sequence is MPPPLQAQRLLLSHRRLPSPHRRRFTAVSSLPSSPAKTVAAAAAHAPSSILSIRESLLSGERTAAEITAEYLSRLRRTEPSVRSFIHVADAAAEREAEELDRRIATEGLDAVGPLAGVLVGVKDNLCTANMPSTGGSRILDGYQPAYDATAVRRLREAGAIVVGKTNLDEFGMGSTTEGSGFQVTTNPWDDSRVPGGSSGGSASAVSARQCVVSLGSDTGGSVRQPASFCGVVGLKPTYGRVSRFGLMAYASSLDVVGCFGSSVVDTATILSVIAGHDKMDSTSSSHDVSDYKSELVPLDLLESKPLNGMRIGIIQETLGEGVETGVISSIKDAASHLEQLGSVVEEVSLPSFSLGLPAYYILASSEASSNLSRYDGIRYGRQVSGDDLNELYGGSRANGLGHEVKMRILMGTYALSAGYYDAYYKRAQQVRTLVKKSFKEALERYDILVSPAAPSAAYKIGEKINDPLAMYAGDTMTVNVNLAGLPALVVPCGFVEGGSAGLPVGLQMIGSPFSEGNLLRIGHIFEQTLQNYSFVPPLLAES.

Active-site charge relay system residues include lysine 123 and serine 198. Serine 222 acts as the Acyl-ester intermediate in catalysis.

It belongs to the amidase family. GatA subfamily. In terms of assembly, subunit of the heterotrimeric GatCAB amidotransferase (AdT) complex, composed of A, B and C subunits.

It is found in the mitochondrion. It localises to the plastid. Its subcellular location is the chloroplast stroma. The catalysed reaction is L-glutamyl-tRNA(Gln) + L-glutamine + ATP + H2O = L-glutaminyl-tRNA(Gln) + L-glutamate + ADP + phosphate + H(+). In terms of biological role, allows the formation of correctly charged Gln-tRNA(Gln) through the transamidation of misacylated Glu-tRNA(Gln) in chloroplasts and mitochondria. The reaction takes place in the presence of glutamine and ATP through an activated gamma-phospho-Glu-tRNA(Gln). The protein is Glutamyl-tRNA(Gln) amidotransferase subunit A, chloroplastic/mitochondrial of Oryza sativa subsp. indica (Rice).